The primary structure comprises 700 residues: Glycine--tRNA ligase beta subunit (700 aa).

Belongs to the class-II aminoacyl-tRNA synthetase family. As to quaternary structure, tetramer of two alpha and two beta subunits.

It localises to the cytoplasm. It catalyses the reaction tRNA(Gly) + glycine + ATP = glycyl-tRNA(Gly) + AMP + diphosphate. This Janthinobacterium sp. (strain Marseille) (Minibacterium massiliensis) protein is Glycine--tRNA ligase beta subunit.